The sequence spans 47 residues: Protein YqhI (47 aa).

This Escherichia coli (strain K12) protein is Protein YqhI.